Here is a 124-residue protein sequence, read N- to C-terminus: Protein S100-A16 (124 aa).

The 15-residue stretch at 23-37 (VSKHSLVKNKISKSS) folds into the EF-hand 1; degenerate domain. In terms of domain architecture, EF-hand 2 spans 54-89 (GNRKAADKLIQNLDANHDGRICFDEYWTMIGGITSP). Ca(2+) contacts are provided by aspartate 67, asparagine 69, aspartate 71, arginine 73, and glutamate 78. The segment at 97–124 (QECQQESQQECQQESQQESQQESQQGSS) is disordered.

Belongs to the S-100 family. Homodimer. Interacts with TP53. Ubiquitous. Widely distributed throughout the adult brain and predominantly expressed within specific astrocyte populations. Expressed at high level in adipose tissues of obese animals.

It is found in the nucleus. It localises to the nucleolus. Its subcellular location is the cytoplasm. Calcium-binding protein. Binds one calcium ion per monomer. Can promote differentiation of adipocytes (in vitro). Overexpression in 3T3-L1 preadipocytes increases their proliferation, enhances adipogenesis and reduces insulin-stimulated glucose uptake. The sequence is that of Protein S100-A16 from Mus musculus (Mouse).